Here is a 508-residue protein sequence, read N- to C-terminus: Light-independent protochlorophyllide reductase subunit B (508 aa).

[4Fe-4S] cluster is bound at residue D36. D294 functions as the Proton donor in the catalytic mechanism. 429-430 contributes to the substrate binding site; that stretch reads GM.

The protein belongs to the ChlB/BchB/BchZ family. In terms of assembly, protochlorophyllide reductase is composed of three subunits; ChlL, ChlN and ChlB. Forms a heterotetramer of two ChlB and two ChlN subunits. [4Fe-4S] cluster is required as a cofactor.

The protein resides in the plastid. It localises to the chloroplast. It carries out the reaction chlorophyllide a + oxidized 2[4Fe-4S]-[ferredoxin] + 2 ADP + 2 phosphate = protochlorophyllide a + reduced 2[4Fe-4S]-[ferredoxin] + 2 ATP + 2 H2O. The protein operates within porphyrin-containing compound metabolism; chlorophyll biosynthesis (light-independent). Component of the dark-operative protochlorophyllide reductase (DPOR) that uses Mg-ATP and reduced ferredoxin to reduce ring D of protochlorophyllide (Pchlide) to form chlorophyllide a (Chlide). This reaction is light-independent. The NB-protein (ChlN-ChlB) is the catalytic component of the complex. This chain is Light-independent protochlorophyllide reductase subunit B, found in Pyropia yezoensis (Susabi-nori).